The chain runs to 238 residues: UDP-2,3-diacylglucosamine hydrolase (238 aa).

Mn(2+)-binding residues include aspartate 8, histidine 10, aspartate 41, asparagine 78, and histidine 113. 78 to 79 provides a ligand contact to substrate; it reads NR. Positions 121, 159, 163, 166, and 194 each coordinate substrate. Positions 194 and 196 each coordinate Mn(2+).

It belongs to the LpxH family. Requires Mn(2+) as cofactor.

The protein localises to the cell inner membrane. It carries out the reaction UDP-2-N,3-O-bis[(3R)-3-hydroxytetradecanoyl]-alpha-D-glucosamine + H2O = 2-N,3-O-bis[(3R)-3-hydroxytetradecanoyl]-alpha-D-glucosaminyl 1-phosphate + UMP + 2 H(+). Its pathway is glycolipid biosynthesis; lipid IV(A) biosynthesis; lipid IV(A) from (3R)-3-hydroxytetradecanoyl-[acyl-carrier-protein] and UDP-N-acetyl-alpha-D-glucosamine: step 4/6. Hydrolyzes the pyrophosphate bond of UDP-2,3-diacylglucosamine to yield 2,3-diacylglucosamine 1-phosphate (lipid X) and UMP by catalyzing the attack of water at the alpha-P atom. Involved in the biosynthesis of lipid A, a phosphorylated glycolipid that anchors the lipopolysaccharide to the outer membrane of the cell. This Shewanella piezotolerans (strain WP3 / JCM 13877) protein is UDP-2,3-diacylglucosamine hydrolase.